We begin with the raw amino-acid sequence, 387 residues long: Anhydro-N-acetylmuramic acid kinase (387 aa).

9 to 16 (GTSVDGID) provides a ligand contact to ATP.

It belongs to the anhydro-N-acetylmuramic acid kinase family.

The enzyme catalyses 1,6-anhydro-N-acetyl-beta-muramate + ATP + H2O = N-acetyl-D-muramate 6-phosphate + ADP + H(+). Its pathway is amino-sugar metabolism; 1,6-anhydro-N-acetylmuramate degradation. It participates in cell wall biogenesis; peptidoglycan recycling. Catalyzes the specific phosphorylation of 1,6-anhydro-N-acetylmuramic acid (anhMurNAc) with the simultaneous cleavage of the 1,6-anhydro ring, generating MurNAc-6-P. Is required for the utilization of anhMurNAc either imported from the medium or derived from its own cell wall murein, and thus plays a role in cell wall recycling. In Synechocystis sp. (strain ATCC 27184 / PCC 6803 / Kazusa), this protein is Anhydro-N-acetylmuramic acid kinase.